The chain runs to 179 residues: Probable chemoreceptor glutamine deamidase CheD 2 (179 aa).

This sequence belongs to the CheD family.

It carries out the reaction L-glutaminyl-[protein] + H2O = L-glutamyl-[protein] + NH4(+). Functionally, probably deamidates glutamine residues to glutamate on methyl-accepting chemotaxis receptors (MCPs), playing an important role in chemotaxis. The sequence is that of Probable chemoreceptor glutamine deamidase CheD 2 from Ruegeria sp. (strain TM1040) (Silicibacter sp.).